A 388-amino-acid polypeptide reads, in one-letter code: tRNA(Ile)-lysidine synthase (388 aa).

Position 51–56 (51–56) interacts with ATP; the sequence is SGGRDS.

It belongs to the tRNA(Ile)-lysidine synthase family.

Its subcellular location is the cytoplasm. The catalysed reaction is cytidine(34) in tRNA(Ile2) + L-lysine + ATP = lysidine(34) in tRNA(Ile2) + AMP + diphosphate + H(+). In terms of biological role, ligates lysine onto the cytidine present at position 34 of the AUA codon-specific tRNA(Ile) that contains the anticodon CAU, in an ATP-dependent manner. Cytidine is converted to lysidine, thus changing the amino acid specificity of the tRNA from methionine to isoleucine. This chain is tRNA(Ile)-lysidine synthase, found in Bifidobacterium longum subsp. infantis (strain ATCC 15697 / DSM 20088 / JCM 1222 / NCTC 11817 / S12).